The following is a 116-amino-acid chain: Large ribosomal subunit protein uL23 (116 aa).

Belongs to the universal ribosomal protein uL23 family. As to quaternary structure, part of the 50S ribosomal subunit. Contacts protein L29, and trigger factor when it is bound to the ribosome.

In terms of biological role, one of the early assembly proteins it binds 23S rRNA. One of the proteins that surrounds the polypeptide exit tunnel on the outside of the ribosome. Forms the main docking site for trigger factor binding to the ribosome. The protein is Large ribosomal subunit protein uL23 of Psychrobacter sp. (strain PRwf-1).